The following is a 311-amino-acid chain: Exosome complex component Rrp4 (311 aa).

The S1 motif domain occupies 63 to 131; sequence GDVVIGEITD…EVKKVKLGLK (69 aa). A KH domain is found at 139–197; it reads RDGILVYITPTKVPRLIGKRGSMINMVKEKTHCDIVVGQNGVVWIKGEPDMERIAEKVV. The interval 222–311 is disordered; it reads GVEPEIQVEE…EVKDENNSER (90 aa). Over residues 241–300 the composition is skewed to acidic residues; the sequence is PESEDFEEASDYSEDVEVSPESEDIEEVSDESEDLEVESEDVEEGTDTPAAEEDDGEAGD. The segment covering 301–311 has biased composition (basic and acidic residues); it reads AEVKDENNSER.

This sequence belongs to the RRP4 family. Component of the archaeal exosome complex. Forms a trimer of Rrp4 and/or Csl4 subunits. The trimer associates with a hexameric ring-like arrangement composed of 3 Rrp41-Rrp42 heterodimers.

The protein resides in the cytoplasm. Its function is as follows. Non-catalytic component of the exosome, which is a complex involved in RNA degradation. Increases the RNA binding and the efficiency of RNA degradation. Confers strong poly(A) specificity to the exosome. The chain is Exosome complex component Rrp4 from Methanothermobacter thermautotrophicus (strain ATCC 29096 / DSM 1053 / JCM 10044 / NBRC 100330 / Delta H) (Methanobacterium thermoautotrophicum).